Here is a 406-residue protein sequence, read N- to C-terminus: E3 ubiquitin-protein ligase RING1 (406 aa).

T24 carries the phosphothreonine modification. The tract at residues 30–234 is necessary for transcriptional repression; the sequence is MDGTEIAVSP…GGAGSEDSGD (205 aa). Residue S38 is modified to Phosphoserine. The RING-type zinc-finger motif lies at 48–88; the sequence is CPICLDMLKNTMTTKECLHRFCSDCIVTALRSGNKECPTCR. Phosphoserine is present on residues S140, S187, and S190. 2 disordered regions span residues 151-263 and 309-354; these read HRAQ…GEIE and QQQE…PSLE. Positions 175-187 are enriched in acidic residues; that stretch reads EPGEGEGDGEDVS. A Nuclear localization signal motif is present at residues 201–204; it reads KRPR. Positions 214 to 228 are enriched in gly residues; the sequence is GTGGGAAGGACGGAG. T215 carries the post-translational modification Phosphothreonine. S229 and S232 each carry phosphoserine. The segment at 230 to 406 is necessary for interaction with CBX2; sequence EDSGDRGGTL…LCYAPTKDPK (177 aa). Residues 235–244 are compositionally biased toward gly residues; that stretch reads RGGTLGGGTL. Over residues 246-258 the composition is skewed to pro residues; it reads PPSPPGAPSPPEP. 2 positions are modified to phosphoserine: S248 and S254. Residues 317-343 are compositionally biased toward gly residues; the sequence is GGPGGGASDTGGPDGGGGERGVAGGGE.

In terms of assembly, component of chromatin-associated Polycomb (PcG) complexes. Part of the E2F6.com-1 complex in G0 phase composed of E2F6, MGA, MAX, TFDP1, CBX3, BAT8, EUHMTASE1, RING1, RNF2/RING2 MBLR, L3MBTL2 and YAF2. Interacts with CBX2 and PCGF6. Component of a PRC1-like complex. Component of repressive BCOR complex containing Polycomb group subcomplex at least composed of RYBP, PCGF1, BCOR and RNF2/RING2. Interacts with PHC2, PCGF2, RNF2; CBX6, CBX7 and CBX8. Interacts with BMI1. Interacts with MN1. Interacts with USP26.

The protein localises to the nucleus speckle. It carries out the reaction S-ubiquitinyl-[E2 ubiquitin-conjugating enzyme]-L-cysteine + [acceptor protein]-L-lysine = [E2 ubiquitin-conjugating enzyme]-L-cysteine + N(6)-ubiquitinyl-[acceptor protein]-L-lysine.. Its pathway is protein modification; protein ubiquitination. Constitutes one of the E3 ubiquitin-protein ligases that mediate monoubiquitination of 'Lys-119' of histone H2A, thereby playing a central role in histone code and gene regulation. H2A 'Lys-119' ubiquitination gives a specific tag for epigenetic transcriptional repression and participates in X chromosome inactivation of female mammals. Essential component of a Polycomb group (PcG) multiprotein PRC1-like complex, a complex class required to maintain the transcriptionally repressive state of many genes, including Hox genes, throughout development. PcG PRC1 complex acts via chromatin remodeling and modification of histones, rendering chromatin heritably changed in its expressibility. Compared to RNF2/RING2, it does not have the main E3 ubiquitin ligase activity on histone H2A, and it may rather act as a modulator of RNF2/RING2 activity. The chain is E3 ubiquitin-protein ligase RING1 from Mus musculus (Mouse).